The sequence spans 297 residues: Large ribosomal subunit protein uL24m (297 aa).

Ser2 is subject to N-acetylserine. The KOW domain maps to 63 to 96 (FIPGDRVVVMSGASKGNIAVIKSFDKRTNSFILD).

This sequence belongs to the universal ribosomal protein uL24 family. As to quaternary structure, component of the mitochondrial large ribosomal subunit (mt-LSU). Mature yeast 74S mitochondrial ribosomes consist of a small (37S) and a large (54S) subunit. The 37S small subunit contains a 15S ribosomal RNA (15S mt-rRNA) and 34 different proteins. The 54S large subunit contains a 21S rRNA (21S mt-rRNA) and 46 different proteins. uL24m forms the wall of the exit tunnel.

It localises to the mitochondrion. Its function is as follows. Component of the mitochondrial ribosome (mitoribosome), a dedicated translation machinery responsible for the synthesis of mitochondrial genome-encoded proteins, including at least some of the essential transmembrane subunits of the mitochondrial respiratory chain. The mitoribosomes are attached to the mitochondrial inner membrane and translation products are cotranslationally integrated into the membrane. This is Large ribosomal subunit protein uL24m (MRPL40) from Saccharomyces cerevisiae (strain ATCC 204508 / S288c) (Baker's yeast).